A 1252-amino-acid chain; its full sequence is LRR receptor-like serine/threonine-protein kinase GSO2 (1252 aa).

The N-terminal stretch at methionine 1 to glycine 22 is a signal peptide. At glutamine 23–valine 876 the chain is on the extracellular side. Residues asparagine 62, asparagine 77, and asparagine 117 are each glycosylated (N-linked (GlcNAc...) asparagine). LRR repeat units lie at residues phenylalanine 94–leucine 118, serine 120–leucine 143, valine 144–asparagine 166, valine 168–arginine 190, leucine 191–cysteine 215, serine 217–leucine 239, lysine 240–leucine 263, serine 265–glutamate 286, leucine 287–arginine 310, and asparagine 312–asparagine 335. Asparagine 157 carries N-linked (GlcNAc...) asparagine glycosylation. N-linked (GlcNAc...) asparagine glycosylation is found at asparagine 214 and asparagine 229. N-linked (GlcNAc...) asparagine glycosylation occurs at asparagine 299. Residue asparagine 336 is glycosylated (N-linked (GlcNAc...) asparagine). 21 LRR repeats span residues threonine 337–cysteine 360, glutamine 361–leucine 384, glutamate 386–leucine 408, threonine 409–glycine 433, leucine 435–cysteine 456, threonine 457–leucine 480, lysine 481–cysteine 504, glutamine 506–leucine 528, threonine 529–leucine 552, asparagine 554–serine 575, serine 577–serine 599, threonine 600–lysine 622, isoleucine 623–lysine 648, leucine 650–lysine 670, leucine 671–leucine 695, asparagine 697–leucine 719, glutamine 720–leucine 743, lysine 745–leucine 767, glutamine 768–leucine 792, proline 793–methionine 816, and serine 818–arginine 839. N-linked (GlcNAc...) asparagine glycans are attached at residues asparagine 370, asparagine 394, and asparagine 407. Residue asparagine 455 is glycosylated (N-linked (GlcNAc...) asparagine). N-linked (GlcNAc...) asparagine glycans are attached at residues asparagine 538, asparagine 554, asparagine 559, and asparagine 566. A glycan (N-linked (GlcNAc...) asparagine) is linked at asparagine 709. Asparagine 780 carries N-linked (GlcNAc...) asparagine glycosylation. Asparagine 823 is a glycosylation site (N-linked (GlcNAc...) asparagine). The chain crosses the membrane as a helical span at residues isoleucine 877–phenylalanine 897. Residues phenylalanine 898–lysine 1252 are Cytoplasmic-facing. The residue at position 945 (threonine 945) is a Phosphothreonine. Residues leucine 948–leucine 1232 enclose the Protein kinase domain. ATP is bound by residues isoleucine 954–valine 962 and lysine 976. Tyrosine 1024 and tyrosine 1066 each carry phosphotyrosine. Aspartate 1079 (proton acceptor) is an active-site residue. Serine 1114 carries the post-translational modification Phosphoserine. A phosphotyrosine mark is found at tyrosine 1124 and tyrosine 1131.

The protein belongs to the protein kinase superfamily. Ser/Thr protein kinase family. Interacts with CIF1 and CIF2. In terms of tissue distribution, mostly expressed in siliques, seeds, developing embryos and seedlings, detected in flower buds, but not in roots, leaves or stems.

It localises to the cell membrane. The catalysed reaction is L-seryl-[protein] + ATP = O-phospho-L-seryl-[protein] + ADP + H(+). It catalyses the reaction L-threonyl-[protein] + ATP = O-phospho-L-threonyl-[protein] + ADP + H(+). Its function is as follows. Together with GSO1, receptor-like serine/threonine-kinase required during the development of the epidermal surface in embryos and cotyledons. Involved in the nuclear division phase of megagametogenesis. In coordination with GSO2, regulates root growth through control of cell division and cell fate specification. Controls seedling root growth by modulating sucrose response after germination. Receptor of the peptide hormones CIF1 and CIF2 required for contiguous Casparian strip diffusion barrier formation in roots. In Arabidopsis thaliana (Mouse-ear cress), this protein is LRR receptor-like serine/threonine-protein kinase GSO2.